The following is a 184-amino-acid chain: Putative NAD(P)H nitroreductase HI_1542 (184 aa).

FMN is bound by residues 10–12 (RKS), arginine 35, and histidine 39. Residue 122 to 127 (AAQAQG) participates in NAD(+) binding. Residue 132 to 134 (WIS) participates in FMN binding.

Belongs to the nitroreductase family. As to quaternary structure, homodimer. FMN is required as a cofactor.

This is Putative NAD(P)H nitroreductase HI_1542 from Haemophilus influenzae (strain ATCC 51907 / DSM 11121 / KW20 / Rd).